Consider the following 428-residue polypeptide: Sarcosine reductase complex component B subunit alpha (428 aa).

Cysteine 242 is modified (pyruvic acid (Cys)).

In terms of assembly, heterotetramer of two alpha and two beta subunits. Component of the sarcosine reductase complex, together with components A and C. PB is substrate specific. In terms of processing, the peptide chain is cleaved into beta and alpha chains, and the alpha chain N-terminal cysteine is deaminated and oxidized to form a reactive pyruvoyl group.

It catalyses the reaction acetyl phosphate + methylamine + [thioredoxin]-disulfide + H2O = sarcosine + [thioredoxin]-dithiol + phosphate + H(+). Its function is as follows. In the first step of sarcosine reductase, the substrate is bound to component PB via a Schiff base intermediate. Then the PB-activated substrate is nucleophilically attacked by the selenol anion of component PA to transform it to a carboxymethylated selenoether and the respective amine. By action of component PC, acetyl phosphate is formed, leaving component PA in its oxidized state. Finally component PA becomes reduced by the thioredoxin system to start a new catalytic cycle of reductive deamination. This chain is Sarcosine reductase complex component B subunit alpha (grdG), found in Peptoclostridium acidaminophilum (Eubacterium acidaminophilum).